A 532-amino-acid polypeptide reads, in one-letter code: Muscarinic acetylcholine receptor M5 (532 aa).

Over 1–29 (MEGDSYHNATTVNGTPVYHQPLERHRLWE) the chain is Extracellular. Residue Asn8 is glycosylated (N-linked (GlcNAc...) asparagine). A helical membrane pass occupies residues 30-53 (VISIAAVTAVVSLITIVGNVLVMI). Over 54-66 (SFKVNSQLKTVNN) the chain is Cytoplasmic. Residues 67–87 (YYLLSLACADLIIGIFSMNLY) traverse the membrane as a helical segment. Over 88–104 (TTYILMGRWALGSLACD) the chain is Extracellular. Residues Cys103 and Cys183 are joined by a disulfide bond. Residues 105-126 (LWLALDYVASNASVMNLLVISF) form a helical membrane-spanning segment. The Cytoplasmic portion of the chain corresponds to 127–146 (DRYFSITRPLTYRAKRTPKR). The chain crosses the membrane as a helical span at residues 147-169 (AGVMIGLAWLISFILWAPAILCW). The Extracellular segment spans residues 170 to 191 (QYLVGKRTVPLDECQIQFLSEP). Residues 192-214 (TITFGTAIAAFYIPVSVMTILYC) traverse the membrane as a helical segment. The Cytoplasmic portion of the chain corresponds to 215 to 443 (RIYRETEKRT…LVKERKAAQT (229 aa)). Residues 262-365 (AQRERNQTSW…SDTPNYFLSP (104 aa)) are disordered. Residues 269–281 (TSWSSSRRSASTS) show a composition bias toward low complexity. The segment covering 282-308 (GKPSQATDPSTNQAKAEQLTTCSSYPS) has biased composition (polar residues). The helical transmembrane segment at 444–464 (LSAILLAFIITWTPYNIMVLV) threads the bilayer. At 465 to 478 (STFCDKCVPVTLWH) the chain is on the extracellular side. A helical membrane pass occupies residues 479-498 (LGYWLCYVNSTVNPICYALC). Topologically, residues 499–532 (NRTFRKTFKMLLLCRWKKKKVEEKLYWQGNSKLP) are cytoplasmic. Phosphothreonine occurs at positions 501 and 505.

This sequence belongs to the G-protein coupled receptor 1 family. Muscarinic acetylcholine receptor subfamily. CHRM5 sub-subfamily.

It is found in the cell membrane. Its subcellular location is the postsynaptic cell membrane. The muscarinic acetylcholine receptor mediates various cellular responses, including inhibition of adenylate cyclase, breakdown of phosphoinositides and modulation of potassium channels through the action of G proteins. Primary transducing effect is Pi turnover. This is Muscarinic acetylcholine receptor M5 (CHRM5) from Macaca mulatta (Rhesus macaque).